A 200-amino-acid chain; its full sequence is Ubiquinol-cytochrome-c reductase complex assembly factor 1 (200 aa).

It belongs to the CBP3 family.

It is found in the mitochondrion inner membrane. Required for the assembly of the ubiquinol-cytochrome c reductase complex (mitochondrial respiratory chain complex III or cytochrome b-c1 complex). May be involved in cytochrome b translation and/or stability. In Xenopus laevis (African clawed frog), this protein is Ubiquinol-cytochrome-c reductase complex assembly factor 1 (uqcc1).